The chain runs to 134 residues: ATP synthase epsilon chain (134 aa).

This sequence belongs to the ATPase epsilon chain family. F-type ATPases have 2 components, CF(1) - the catalytic core - and CF(0) - the membrane proton channel. CF(1) has five subunits: alpha(3), beta(3), gamma(1), delta(1), epsilon(1). CF(0) has three main subunits: a, b and c.

It is found in the cell membrane. Produces ATP from ADP in the presence of a proton gradient across the membrane. The protein is ATP synthase epsilon chain of Alkaliphilus oremlandii (strain OhILAs) (Clostridium oremlandii (strain OhILAs)).